Reading from the N-terminus, the 892-residue chain is Chromodomain-helicase-DNA-binding protein 3 (892 aa).

Positions 1-20 (MSSKRGADPDWKTPGKASKD) are enriched in basic and acidic residues. The disordered stretch occupies residues 1-29 (MSSKRGADPDWKTPGKASKDKRPKTNAKK). The PHD-type zinc finger occupies 35–82 (EEYCKVCSDGGDLLCCDSCPSVYHRTCLSPPLKSIPKGDWICPRCIPL). Chromo domains are found at residues 84-156 (GKAE…PSLE) and 179-240 (LLVQ…GRQR). Residues 279-458 (RYSWGQGIPT…FHLLNFLSSG (180 aa)) form the Helicase ATP-binding domain. An ATP-binding site is contributed by 292 to 299 (DEMGLGKT). Residues 409–412 (DEAH) carry the DEAH box motif. The 150-residue stretch at 590–739 (LLSKMLKQLK…LTHLVVRPGM (150 aa)) folds into the Helicase C-terminal domain. The interval 839-892 (SQPKLPKKQKKQSQQSQVDVESIMGKGKRIRKEIDYSNQYPSPNRATPSSIVLM) is disordered. A compositionally biased stretch (polar residues) spans 874–892 (YSNQYPSPNRATPSSIVLM).

The protein belongs to the SNF2/RAD54 helicase family. As to quaternary structure, monomer.

The protein resides in the nucleus. It localises to the chromosome. The enzyme catalyses ATP + H2O = ADP + phosphate + H(+). ATPase activity is stimulated by binding to DNA or nucleosomes, but is strongly activated by nucleosomes. ATP-dependent chromatin-remodeling factor which acts in nucleosome-remodeling by catalyzing ATP-dependent nucleosome mobilization. Likely to be involved in the regulation of transcription. The sequence is that of Chromodomain-helicase-DNA-binding protein 3 from Drosophila melanogaster (Fruit fly).